The following is a 215-amino-acid chain: Pyrrolidone-carboxylate peptidase (215 aa).

Residues Glu80, Cys143, and His167 contribute to the active site.

This sequence belongs to the peptidase C15 family. As to quaternary structure, homotetramer.

It is found in the cytoplasm. The enzyme catalyses Release of an N-terminal pyroglutamyl group from a polypeptide, the second amino acid generally not being Pro.. Its function is as follows. Removes 5-oxoproline from various penultimate amino acid residues except L-proline. In Bacillus thuringiensis subsp. konkukian (strain 97-27), this protein is Pyrrolidone-carboxylate peptidase.